The following is a 535-amino-acid chain: Arylsulfatase K (535 aa).

Positions 1-22 (MLLLWLSVFAASALAAPDRGAG) are cleaved as a signal peptide. Residues D44 and C84 each contribute to the Ca(2+) site. C84 functions as the Nucleophile in the catalytic mechanism. At C84 the chain carries 3-oxoalanine (Cys). N112 carries N-linked (GlcNAc...) asparagine glycosylation. Residue K132 coordinates substrate. N197 is a glycosylation site (N-linked (GlcNAc...) asparagine). Residue H255 participates in substrate binding. An N-linked (GlcNAc...) asparagine glycan is attached at N266. Ca(2+) is bound by residues D317 and H318. N-linked (GlcNAc...) asparagine glycans are attached at residues N379, N417, and N502.

Belongs to the sulfatase family. Ca(2+) serves as cofactor. The conversion to 3-oxoalanine (also known as C-formylglycine, FGly), of a serine or cysteine residue in prokaryotes and of a cysteine residue in eukaryotes, is critical for catalytic activity. Post-translationally, the 75-kDa precursor undergoes proteolytic processing to yield a 23 kDa form. In terms of processing, N-glycosylated with both high mannose and complex type sugars.

It is found in the secreted. The protein resides in the lysosome. It catalyses the reaction an aryl sulfate + H2O = a phenol + sulfate + H(+). It carries out the reaction Hydrolysis of the 2-sulfate groups of the 2-O-sulfo-D-glucuronate residues of chondroitin sulfate, heparin and heparitin sulfate.. Catalyzes the hydrolysis of pseudosubstrates such as p-nitrocatechol sulfate and p-nitrophenyl sulfate. Catalyzes the hydrolysis of the 2-sulfate groups of the 2-O-sulfo-D-glucuronate residues of chondroitin sulfate, heparin and heparitin sulfate. Acts selectively on 2-sulfoglucuronate and lacks activity against 2-sulfoiduronate. This chain is Arylsulfatase K (ARSK), found in Canis lupus familiaris (Dog).